The primary structure comprises 634 residues: uncharacterized protein (634 aa).

Residues 1–40 (MWLQQRLKGLPGLLSSSWARRLLCLLGLLLLLLWFGGSGA) form the signal peptide. Residues 41–589 (RRAAGGLHLL…DEHMAQQDPG (549 aa)) lie on the Extracellular side of the membrane. N-linked (GlcNAc...) asparagine glycosylation occurs at Asn-363. The chain crosses the membrane as a helical span at residues 590 to 610 (LPFLFWFSVASLITLFHLFLF). At 611-634 (KLIYNEYCGPGAKPLFRSKEDPSV) the chain is on the cytoplasmic side.

The protein resides in the membrane. This is an uncharacterized protein from Homo sapiens (Human).